A 608-amino-acid chain; its full sequence is Dextranase (608 aa).

The N-terminal stretch at 1-19 (MATMLKLLALTLAISESAI) is a signal peptide. Positions 20 to 34 (GAVMHPPGNSHPGTH) are excised as a propeptide. 3 N-linked (GlcNAc...) asparagine glycosylation sites follow: Asn-39, Asn-571, and Asn-574.

The protein belongs to the glycosyl hydrolase 49 family. Post-translationally, N-glycosylated.

The protein localises to the secreted. It catalyses the reaction Endohydrolysis of (1-&gt;6)-alpha-D-glucosidic linkages in dextran.. The sequence is that of Dextranase (DEX) from Talaromyces minioluteus (Filamentous fungus).